The following is a 302-amino-acid chain: Deoxyhypusine hydroxylase-B (302 aa).

HEAT-like PBS-type repeat units lie at residues 49 to 75, 82 to 108, 171 to 200, 204 to 230, and 237 to 263; these read LAHE…VLKD, VRHE…SLAV, MYER…LGVK, LRHE…VLKN, and VRHE…FAKD. Fe cation is bound by residues H51, E52, H84, and E85. 4 residues coordinate Fe cation: H206, E207, H239, and E240.

Belongs to the deoxyhypusine hydroxylase family. Requires Fe(2+) as cofactor.

The enzyme catalyses [eIF5A protein]-deoxyhypusine + AH2 + O2 = [eIF5A protein]-hypusine + A + H2O. The protein operates within protein modification; eIF5A hypusination. Catalyzes the hydroxylation of the N(6)-(4-aminobutyl)-L-lysine intermediate to form hypusine, an essential post-translational modification only found in mature eIF-5A factor. The chain is Deoxyhypusine hydroxylase-B from Oryza sativa subsp. japonica (Rice).